The primary structure comprises 250 residues: NH(3)-dependent NAD(+) synthetase (250 aa).

ATP is bound at residue 30-37 (GVSGGIDS). Mg(2+) is bound at residue Asp36. Arg117 contributes to the deamido-NAD(+) binding site. Thr137 provides a ligand contact to ATP. Glu142 provides a ligand contact to Mg(2+). The deamido-NAD(+) site is built by Lys150 and Asp157. The ATP site is built by Lys166 and Ser188. Deamido-NAD(+) is bound at residue 234–235 (HK).

Belongs to the NAD synthetase family. Homodimer.

The catalysed reaction is deamido-NAD(+) + NH4(+) + ATP = AMP + diphosphate + NAD(+) + H(+). It participates in cofactor biosynthesis; NAD(+) biosynthesis; NAD(+) from deamido-NAD(+) (ammonia route): step 1/1. In terms of biological role, catalyzes the ATP-dependent amidation of deamido-NAD to form NAD. Uses ammonia as a nitrogen source. The protein is NH(3)-dependent NAD(+) synthetase of Mannheimia succiniciproducens (strain KCTC 0769BP / MBEL55E).